The chain runs to 236 residues: Phosphoribosylformylglycinamidine synthase subunit PurQ (236 aa).

The Glutamine amidotransferase type-1 domain occupies 2–234 (RFAVVTFPGS…LSVGLEVAHS (233 aa)). Cys-86 acts as the Nucleophile in catalysis. Residues His-203 and Glu-205 contribute to the active site.

In terms of assembly, part of the FGAM synthase complex composed of 1 PurL, 1 PurQ and 2 PurS subunits.

It is found in the cytoplasm. The catalysed reaction is N(2)-formyl-N(1)-(5-phospho-beta-D-ribosyl)glycinamide + L-glutamine + ATP + H2O = 2-formamido-N(1)-(5-O-phospho-beta-D-ribosyl)acetamidine + L-glutamate + ADP + phosphate + H(+). It carries out the reaction L-glutamine + H2O = L-glutamate + NH4(+). Its pathway is purine metabolism; IMP biosynthesis via de novo pathway; 5-amino-1-(5-phospho-D-ribosyl)imidazole from N(2)-formyl-N(1)-(5-phospho-D-ribosyl)glycinamide: step 1/2. Functionally, part of the phosphoribosylformylglycinamidine synthase complex involved in the purines biosynthetic pathway. Catalyzes the ATP-dependent conversion of formylglycinamide ribonucleotide (FGAR) and glutamine to yield formylglycinamidine ribonucleotide (FGAM) and glutamate. The FGAM synthase complex is composed of three subunits. PurQ produces an ammonia molecule by converting glutamine to glutamate. PurL transfers the ammonia molecule to FGAR to form FGAM in an ATP-dependent manner. PurS interacts with PurQ and PurL and is thought to assist in the transfer of the ammonia molecule from PurQ to PurL. The protein is Phosphoribosylformylglycinamidine synthase subunit PurQ of Thermomicrobium roseum (strain ATCC 27502 / DSM 5159 / P-2).